The following is a 415-amino-acid chain: von Willebrand factor A domain-containing protein 1 (415 aa).

The first 18 residues, Met-1–Ala-18, serve as a signal peptide directing secretion. Positions Asp-34–Met-213 constitute a VWFA domain. Residues Ser-74, Ser-80, and Ser-93 each carry the phosphoserine modification. 2 consecutive Fibronectin type-III domains span residues Gln-214–Glu-305 and Gly-307–Ala-405. The N-linked (GlcNAc...) asparagine glycan is linked to Asn-264. Cysteines 369 and 393 form a disulfide.

Homodimer or homomultimer; disulfide-linked. Interacts with HSPG2. Post-translationally, N-glycosylated.

The protein localises to the secreted. The protein resides in the extracellular space. It localises to the extracellular matrix. Its subcellular location is the basement membrane. Promotes matrix assembly. Involved in the organization of skeletal muscles and in the formation of neuromuscular junctions. The sequence is that of von Willebrand factor A domain-containing protein 1 (Vwa1) from Rattus norvegicus (Rat).